Here is a 344-residue protein sequence, read N- to C-terminus: Phosphate acyltransferase (344 aa).

The protein belongs to the PlsX family. As to quaternary structure, homodimer. Probably interacts with PlsY.

The protein localises to the cytoplasm. It carries out the reaction a fatty acyl-[ACP] + phosphate = an acyl phosphate + holo-[ACP]. It participates in lipid metabolism; phospholipid metabolism. In terms of biological role, catalyzes the reversible formation of acyl-phosphate (acyl-PO(4)) from acyl-[acyl-carrier-protein] (acyl-ACP). This enzyme utilizes acyl-ACP as fatty acyl donor, but not acyl-CoA. This Acaryochloris marina (strain MBIC 11017) protein is Phosphate acyltransferase.